We begin with the raw amino-acid sequence, 101 residues long: DNA-binding protein Fis (101 aa).

The H-T-H motif DNA-binding region spans 77–96; it reads QTRAANMLGINRGTLRKKLK.

This sequence belongs to the transcriptional regulatory Fis family. In terms of assembly, homodimer.

In terms of biological role, activates ribosomal RNA transcription. Plays a direct role in upstream activation of rRNA promoters. The polypeptide is DNA-binding protein Fis (Shewanella denitrificans (strain OS217 / ATCC BAA-1090 / DSM 15013)).